The chain runs to 1173 residues: MSYEYYYQQQQQQQQQQQQQQQQPTFDYASYYDNQQQQHPQPQYPVYDHTAQSNDSQQQHYGSSYVDPTYATTSTTQQQQQQPSIYDYNTGGNRNSGQYDQYNTTNTTTPNTTQNYDYSNTSGNRNSGQYDQYTTTNTTSANTYGYDNSKTHSPTPSSYDYSTNSYYSQQQQQQPTPTVAATNNTTNTSTNYDSYYQPPAQRNSYDYSQTQQQHSPTSSYDYSQVTNNTATNYDSYYQQPTTPTSTSSSSSTTTTTTTDNQSKFEKSQSLKNMDHFIKGTPSNTPSATINSWDYNQQQPQPQQPQSVYNNPSSSTTNTTYNNPSTTTTTSSPTNTNTTYNNPSSATNTNYNNRNSWGYDQSTYNNSSYNNNTDTYSNQTQQQEYQVLYDKKYQEEEEKRRKEYEESWRVYYEQQAAYEKEQERIRNEEMEKIRIKHEEESNRLKNELEKQRDEIQKMKDQLVQQQNASKKKGEEDLKQMEQAKQAALQWQQEEMKRQLIEVQKERDLSRKHEEQVRLALLEEQRVIKEKLDEKQQQLISQQQAFQSKLHQDECSRKVEEEKKCEEMKKREFELLERNKELDALKSKLQSDLTTSLKSKEDLENQRKALEETTLREKKEIQIYKQSIDEETKRKKLEIEQARQQEEKKLKEQQDHINRQKEMVDCQQRELLVQINQSKQATIDSLQPMRNMLSTLNINNKNSPASNIALKNKDDQNINDNLPQQKPVIPSRNSSHLPKLSPTIQQPQPQQEQPPQQQQQQQQQQQQQQQQQQPVKIVKTYTQKELDQIVDGNYRFGDIIRVQRVSRKWLARKKFKDLVKMKLLSNDPETENMRNRFKSVNELYSTELSYLNSLLILRDFYFIPMEVEARVTKLFKSEEINKVFSNLKSILQISTEITHLLEERLSVSPVKIGDIFVKFAPIFKIYVEYVNNFDKVAPQLKAMTENPQSKKFFSEQRNKSRVATDINSLLIMPVQRCPRYELLLREILKHTQEDHVEFKNIKSAYESIKDINKYINDRKRNVDNRAKLLELQKEIKNAPELIESHRYFVRESQCNISANKKSESGGFYLFFFNDMVLVTKKSSLFSNYKYVYTIPLKNADIKDISSNDSMIRIIVGSLESIDVLIYTISLPSKKDKESWLQDLSVELKPKGIEIGQYSSSQLLESQVQFSNSKTK.

3 disordered regions span residues 1–380 (MSYE…NQTQ), 458–479 (KDQL…LKQM), and 712–765 (DDQN…QQQQ). Composition is skewed to low complexity over residues 8–23 (QQQQ…QQQQ) and 35–45 (QQQQHPQPQYP). Residues 50–62 (TAQSNDSQQQHYG) are compositionally biased toward polar residues. Composition is skewed to low complexity over residues 72-82 (TTSTTQQQQQQ) and 98-118 (QYDQ…NYDY). A compositionally biased stretch (polar residues) spans 119 to 133 (SNTSGNRNSGQYDQY). Low complexity-rich tracts occupy residues 134 to 143 (TTTNTTSANT), 153 to 191 (SPTP…TSTN), and 208 to 219 (SQTQQQHSPTSS). A compositionally biased stretch (polar residues) spans 220–239 (YDYSQVTNNTATNYDSYYQQ). Residues 240 to 258 (PTTPTSTSSSSSTTTTTTT) show a composition bias toward low complexity. Basic and acidic residues predominate over residues 262-277 (SKFEKSQSLKNMDHFI). A compositionally biased stretch (polar residues) spans 280 to 295 (TPSNTPSATINSWDYN). Low complexity predominate over residues 296–380 (QQQPQPQQPQ…NTDTYSNQTQ (85 aa)). Residues 470 to 479 (KKGEEDLKQM) are compositionally biased toward basic and acidic residues. Over residues 743–765 (QQPQPQQEQPPQQQQQQQQQQQQ) the composition is skewed to low complexity. One can recognise an IQ domain in the interval 793–822 (RFGDIIRVQRVSRKWLARKKFKDLVKMKLL). Residues 833 to 1016 (NRFKSVNELY…KDINKYINDR (184 aa)) enclose the DH domain. In terms of domain architecture, PH spans 1044-1146 (RYFVRESQCN…WLQDLSVELK (103 aa)).

Functionally, GTPase-activating protein. This is Rac guanine nucleotide exchange factor JJ (gxcJJ) from Dictyostelium discoideum (Social amoeba).